Reading from the N-terminus, the 43-residue chain is Augerpeptide hhe9.2 (43 aa).

One can recognise an EGF-like domain in the interval 2–40 (EEVGCFPNVCKNDGNCSIETSTGMTRCQCLEGYTGHVCE). 3 disulfide bridges follow: C6/C28, C11/C30, and C17/C39.

In terms of tissue distribution, expressed by the venom duct.

The protein resides in the secreted. The polypeptide is Augerpeptide hhe9.2 (Hastula hectica (Sea snail)).